The following is a 223-amino-acid chain: Deoxyribose-phosphate aldolase (223 aa).

Aspartate 89 (proton donor/acceptor) is an active-site residue. Lysine 152 acts as the Schiff-base intermediate with acetaldehyde in catalysis. The Proton donor/acceptor role is filled by lysine 181.

Belongs to the DeoC/FbaB aldolase family. DeoC type 1 subfamily.

It is found in the cytoplasm. The catalysed reaction is 2-deoxy-D-ribose 5-phosphate = D-glyceraldehyde 3-phosphate + acetaldehyde. It functions in the pathway carbohydrate degradation; 2-deoxy-D-ribose 1-phosphate degradation; D-glyceraldehyde 3-phosphate and acetaldehyde from 2-deoxy-alpha-D-ribose 1-phosphate: step 2/2. In terms of biological role, catalyzes a reversible aldol reaction between acetaldehyde and D-glyceraldehyde 3-phosphate to generate 2-deoxy-D-ribose 5-phosphate. This chain is Deoxyribose-phosphate aldolase, found in Listeria welshimeri serovar 6b (strain ATCC 35897 / DSM 20650 / CCUG 15529 / CIP 8149 / NCTC 11857 / SLCC 5334 / V8).